Reading from the N-terminus, the 439-residue chain is Type I secretion system membrane fusion protein PrsE (439 aa).

A helical transmembrane segment spans residues L20–T40.

The protein belongs to the membrane fusion protein (MFP) (TC 8.A.1) family. In terms of assembly, part of a type I secretion system composed of PrsD and PrsE.

Its subcellular location is the cell inner membrane. Functionally, mediates secretion of glycanase ExsH. This Rhizobium meliloti (strain 1021) (Ensifer meliloti) protein is Type I secretion system membrane fusion protein PrsE (prsE).